Consider the following 1065-residue polypeptide: FERM, ARHGEF and pleckstrin domain-containing protein 2 (1065 aa).

The region spanning 44–324 (MRIRVKLLDS…EYHTFFRLSD (281 aa)) is the FERM domain. Residues Ser389 and Ser440 each carry the phosphoserine modification. 2 disordered regions span residues 406 to 489 (SFYP…LKSH) and 504 to 534 (EQGASPVLSPVLSGAGTARMDNQEEQKHKHM). Residues 440–459 (STAAERSSGPSSSDGPSTQS) show a composition bias toward low complexity. The span at 524–534 (DNQEEQKHKHM) shows a compositional bias: basic and acidic residues. The 192-residue stretch at 538–729 (EAYFIAKEIL…TEVTTELQQS (192 aa)) folds into the DH domain. The PH 1 domain maps to 758 to 855 (EFIREGCLHK…WMQDLNAAIQ (98 aa)). Residues Ser863 and Ser880 each carry the phosphoserine modification. The disordered stretch occupies residues 874 to 902 (TRTPRSSDEVSLEESEDGRGNRGSLEGNS). The region spanning 930 to 1027 (ENQLSGYLLR…WMDVIKRASS (98 aa)) is the PH 2 domain.

Interacts with PLXNA1. Interaction with PLXNA1 or PIP5K1C lowers its guanine nucleotide exchange activity. Dissociates from PLXNA1 when SEMA3A binds to the receptor. Interacts with PIP5K1C via its FERM domain. The interaction with PIP5K1C is enhanced by SEMA3A binding. Interacts with RAC1. As to expression, detected in adult brain, lung and testis. Detected in embryonic hippocampus and brain cortex.

Its function is as follows. Functions as a guanine nucleotide exchange factor that activates RAC1. May have relatively low activity. Plays a role in the response to class 3 semaphorins and remodeling of the actin cytoskeleton. Plays a role in TNFSF11-mediated osteoclast differentiation, especially in podosome rearrangement and reorganization of the actin cytoskeleton. Regulates the activation of ITGB3, integrin signaling and cell adhesion. The protein is FERM, ARHGEF and pleckstrin domain-containing protein 2 (Farp2) of Mus musculus (Mouse).